A 380-amino-acid chain; its full sequence is Cytochrome b (380 aa).

A run of 4 helical transmembrane segments spans residues 33–53 (FGSLLGLCLLTQILTGLFLAM), 77–98 (WLIRNFHANGASFFFICLYLHI), 113–133 (WNVGVVLFLLVMMTAFVGYVL), and 178–198 (FFAFHFLFPFIIAAMTILHFL). Heme b-binding residues include histidine 83 and histidine 97. 2 residues coordinate heme b: histidine 182 and histidine 196. A ubiquinone is bound at residue histidine 201. Helical transmembrane passes span 226 to 246 (YKDLLGFVVMLLALSTLSLFS), 288 to 308 (LGGVLALLSSILILMLVPILH), 320 to 340 (LTQILFWVLVADVAILTWIGG), and 347 to 367 (FIIVGQVASVLYFALFLVIMP).

The protein belongs to the cytochrome b family. As to quaternary structure, the cytochrome bc1 complex contains 3 respiratory subunits (MT-CYB, CYC1 and UQCRFS1), 2 core proteins (UQCRC1 and UQCRC2) and probably 6 low-molecular weight proteins. The cofactor is heme b.

Its subcellular location is the mitochondrion inner membrane. Its function is as follows. Component of the ubiquinol-cytochrome c reductase complex (complex III or cytochrome b-c1 complex) that is part of the mitochondrial respiratory chain. The b-c1 complex mediates electron transfer from ubiquinol to cytochrome c. Contributes to the generation of a proton gradient across the mitochondrial membrane that is then used for ATP synthesis. The protein is Cytochrome b (mt-cyb) of Zeus faber (John Dory).